The primary structure comprises 485 residues: Pre-glycoprotein polyprotein GP complex (485 aa).

Glycine 2 carries the N-myristoyl glycine; by host lipid modification. The Extracellular segment spans residues 2–17; the sequence is GQFISFMQEIPTFLQE. A helical transmembrane segment spans residues 18–33; that stretch reads ALNIALVAVSLIAIIK. The Cytoplasmic segment spans residues 34–58; the sequence is GVVNLYKSGLFQFFVFLALAGRSCT. Zn(2+) is bound at residue cysteine 57. Residues 59-424 are Extracellular-facing; sequence EEAFKIGLHT…QGKTPLTLVD (366 aa). Cystine bridges form between cysteine 92–cysteine 226, cysteine 135–cysteine 164, cysteine 207–cysteine 213, cysteine 271–cysteine 284, cysteine 293–cysteine 302, and cysteine 356–cysteine 377. N-linked (GlcNAc...) asparagine; by host glycans are attached at residues asparagine 95 and asparagine 105. N-linked (GlcNAc...) asparagine; by host glycans are attached at residues asparagine 166 and asparagine 178. The fusion stretch occupies residues 250 to 286; sequence LKAFFSWSLTDSSGKDTPGGYCLEEWMLVAAKMKCFG. The segment at 287–355 is HR1; that stretch reads NTAVAKCNLN…KIRELMSVPY (69 aa). Asparagine 357, asparagine 365, asparagine 382, and asparagine 387 each carry an N-linked (GlcNAc...) asparagine; by host glycan. The interval 360 to 423 is HR2; it reads KFWYVNHTLS…RQGKTPLTLV (64 aa). A helical transmembrane segment spans residues 425-445; the sequence is ICFWSTVFFTASLFLHLVGIP. At 446–485 the chain is on the cytoplasmic side; that stretch reads THRHIRGEACPLPHRLNSLGGCRCGKYPNLKKPTVWRRGH. Histidine 447, histidine 449, cysteine 455, histidine 459, cysteine 467, cysteine 469, and histidine 485 together coordinate Zn(2+).

Belongs to the arenaviridae GPC protein family. In terms of assembly, interacts with glycoprotein G2. Part of the GP complex (GP-C) together with glycoprotein G1 and glycoprotein G2. The GP-complex interacts with protein Z, which interacts with ribonucleocapsid; these interactions may induce virion budding. Homotrimer; disulfide-linked. In pre-fusion state, G1 homotrimers bind G2 homotrimers via ionic interactions. Part of the GP complex (GP-C) together with glycoprotein G2 and the stable signal peptide. Interacts with host TFRC. The GP-complex interacts with protein Z, which interacts with ribonucleocapsid; these interactions may induce virion budding. As to quaternary structure, homotrimer. Interacts with the stable signal peptide. In pre-fusion state, G2 homotrimers bind G1 homotrimers via ionic interactions. Part of the GP complex (GP-C) together with glycoprotein G1 and the stable signal peptide. Acidification in the endosome triggers rearrangements, which ultimately leads to a 6 helix bundle formed by the two heptad repeat domains (HR1 and HR2) in post-fusion state. The GP-complex interacts with protein Z, which interacts with ribonucleocapsid; these interactions may induce virion budding. Post-translationally, specific enzymatic cleavages in vivo yield mature proteins. GP-C polyprotein is cleaved in the endoplasmic reticulum by the host protease MBTPS1. Only cleaved glycoprotein is incorporated into virions. In terms of processing, the SSP remains stably associated with the GP complex following cleavage by signal peptidase and plays crucial roles in the trafficking of GP through the secretory pathway. Myristoylation is necessary for GP2-mediated fusion activity.

Its subcellular location is the virion membrane. The protein localises to the host endoplasmic reticulum membrane. It localises to the host Golgi apparatus membrane. The protein resides in the host cell membrane. Its function is as follows. Functions as a cleaved signal peptide that is retained as the third component of the GP complex (GP-C). Helps to stabilize the spike complex in its native conformation. The SSP is required for efficient glycoprotein expression, post-translational maturation cleavage of G1 and G2, glycoprotein transport to the cell surface plasma membrane, formation of infectious virus particles, and acid pH-dependent glycoprotein-mediated cell fusion. Forms the virion spikes together with glycoprotein G2. The glycoprotein spike trimers are connected to the underlying matrix. Mediates virus attachment to host TFRC. This attachment induces virion internalization predominantly through clathrin-mediated endocytosis. In terms of biological role, forms the virion spikes together with glycoprotein G1. The glycoprotein spike trimers are connected to the underlying matrix. Class I viral fusion protein that directs fusion of viral and host endosomal membranes, leading to delivery of the nucleocapsid into the cytoplasm. Membrane fusion is mediated by irreversible conformational changes induced by acidification. This Junin mammarenavirus (JUNV) protein is Pre-glycoprotein polyprotein GP complex.